The primary structure comprises 510 residues: 2-isopropylmalate synthase (510 aa).

A Pyruvate carboxyltransferase domain is found at 4 to 266 (IQVFDTTLRD…ETNLKLDETK (263 aa)). 4 residues coordinate Mn(2+): Asp-13, His-201, His-203, and Asn-237. A regulatory domain region spans residues 390 to 510 (QVETLQLQFV…DTARKDGVVS (121 aa)).

The protein belongs to the alpha-IPM synthase/homocitrate synthase family. LeuA type 1 subfamily. As to quaternary structure, homodimer. The cofactor is Mn(2+).

The protein resides in the cytoplasm. The enzyme catalyses 3-methyl-2-oxobutanoate + acetyl-CoA + H2O = (2S)-2-isopropylmalate + CoA + H(+). It functions in the pathway amino-acid biosynthesis; L-leucine biosynthesis; L-leucine from 3-methyl-2-oxobutanoate: step 1/4. In terms of biological role, catalyzes the condensation of the acetyl group of acetyl-CoA with 3-methyl-2-oxobutanoate (2-ketoisovalerate) to form 3-carboxy-3-hydroxy-4-methylpentanoate (2-isopropylmalate). This Staphylococcus carnosus (strain TM300) protein is 2-isopropylmalate synthase.